Here is a 362-residue protein sequence, read N- to C-terminus: MKFLDEAKVYIRSGDGGAGSVSFRREKFIEFGGPDGGDGGRGGDVWVETVNGLNTLIDFRYQQHFKATIGTHGMGRNRTGANGSDVTLKVPVGTQIFEEDRETLICDLTVEGQRYCLAHGGNGGFGNAHFKTSTNQAPDWANPGLPGEEKTIWLRLKLIADAGLVGLPNAGKSTFLASVTRARPKIANYPFTTLHPNLGVATIDEREFILADIPGLIEGAHEGVGIGDRFLGHVERTRVLLHLVSAQEEKVGKAYKTVKHELEAYGNDLTDKPEIVALSQIDVLDEAELKKKTKELAKACGKTPFQISAVTGRGMTEVLRALRDVIVEENAEEKPAKVPKLRHRDMIVSDEGEGEDGADDQP.

An Obg domain is found at 1–159 (MKFLDEAKVY…KTIWLRLKLI (159 aa)). The OBG-type G domain maps to 160 to 327 (ADAGLVGLPN…VLRALRDVIV (168 aa)). GTP contacts are provided by residues 166–173 (GLPNAGKS), 191–195 (FTTLH), 212–215 (DIPG), 279–282 (SQID), and 308–310 (SAV). Positions 173 and 193 each coordinate Mg(2+). The tract at residues 332–362 (EEKPAKVPKLRHRDMIVSDEGEGEDGADDQP) is disordered. Positions 348-362 (VSDEGEGEDGADDQP) are enriched in acidic residues.

It belongs to the TRAFAC class OBG-HflX-like GTPase superfamily. OBG GTPase family. In terms of assembly, monomer. Mg(2+) is required as a cofactor.

The protein resides in the cytoplasm. In terms of biological role, an essential GTPase which binds GTP, GDP and possibly (p)ppGpp with moderate affinity, with high nucleotide exchange rates and a fairly low GTP hydrolysis rate. Plays a role in control of the cell cycle, stress response, ribosome biogenesis and in those bacteria that undergo differentiation, in morphogenesis control. The polypeptide is GTPase Obg (Rhizobium etli (strain CIAT 652)).